The primary structure comprises 99 residues: Small ribosomal subunit protein bS6 (99 aa).

The protein belongs to the bacterial ribosomal protein bS6 family.

In terms of biological role, binds together with bS18 to 16S ribosomal RNA. This Lactiplantibacillus plantarum (strain ATCC BAA-793 / NCIMB 8826 / WCFS1) (Lactobacillus plantarum) protein is Small ribosomal subunit protein bS6.